The following is a 98-amino-acid chain: uncharacterized protein (98 aa).

2 helical membrane-spanning segments follow: residues 14–34 (FLVI…PVTA) and 41–61 (MTGA…ASII).

It is found in the cell membrane. This is an uncharacterized protein from Haemophilus influenzae (strain ATCC 51907 / DSM 11121 / KW20 / Rd).